Here is a 340-residue protein sequence, read N- to C-terminus: Putative D-lactate dehydrogenase (340 aa).

NAD(+)-binding positions include Asn-153–Ile-154, Asp-174, Thr-206–Pro-207, Val-233–Arg-235, and Asp-259. Arg-235 is an active-site residue. Residue Glu-264 is part of the active site. Catalysis depends on His-296, which acts as the Proton donor.

This sequence belongs to the D-isomer specific 2-hydroxyacid dehydrogenase family.

The catalysed reaction is (R)-lactate + NAD(+) = pyruvate + NADH + H(+). The polypeptide is Putative D-lactate dehydrogenase (ldhA) (Dictyostelium discoideum (Social amoeba)).